The sequence spans 357 residues: MSCPMSLSNPSQILLRNSELLVAKVPLFINLPEDGFIEAYTEIHKPDTIHCFNTNFIDYQAITKKHCSPTKTKNVKATFASTYQTTSCHDLVIIAFPKSKAELNFTLAMITHCINDETKIILVGEKKGGIQSAAKLTQHIFSCCQKVDAARHCLLFVGLFQPERLSDVFNLQDWFKKYQITVEGIELTIASLPGVFSQQKLDVGTALLLSNLPSKMTGKVLDFGCGAGVISCFIGKKFSGTNLSLLDVSALALTSAQESLALNGLSGNVFPSNSLSDVNEHYQHVVSNPPFHQGVKTHYQASEDFLAGINKKLNKQGNITIVANSFLRYQPIMETHIGNTRVITKDKGFTIYRAQLS.

The protein belongs to the methyltransferase superfamily. RsmC family. As to quaternary structure, monomer.

Its subcellular location is the cytoplasm. It carries out the reaction guanosine(1207) in 16S rRNA + S-adenosyl-L-methionine = N(2)-methylguanosine(1207) in 16S rRNA + S-adenosyl-L-homocysteine + H(+). Functionally, specifically methylates the guanine in position 1207 of 16S rRNA in the 30S particle. This Colwellia psychrerythraea (strain 34H / ATCC BAA-681) (Vibrio psychroerythus) protein is Ribosomal RNA small subunit methyltransferase C.